The primary structure comprises 201 residues: Lipoprotein signal peptidase (201 aa).

2 helical membrane-spanning segments follow: residues 73–93 (SNAIFLITNTIIVCYLYYLMI) and 97–117 (TIGSFAGYSFVIGGAVGNLID). Catalysis depends on residues D126 and D144. Residues 135 to 155 (YSFPVFNLADCFITIGVIILI) form a helical membrane-spanning segment.

The protein belongs to the peptidase A8 family.

The protein localises to the cell inner membrane. The enzyme catalyses Release of signal peptides from bacterial membrane prolipoproteins. Hydrolyzes -Xaa-Yaa-Zaa-|-(S,diacylglyceryl)Cys-, in which Xaa is hydrophobic (preferably Leu), and Yaa (Ala or Ser) and Zaa (Gly or Ala) have small, neutral side chains.. The protein operates within protein modification; lipoprotein biosynthesis (signal peptide cleavage). This protein specifically catalyzes the removal of signal peptides from prolipoproteins. The sequence is that of Lipoprotein signal peptidase from Rickettsia africae (strain ESF-5).